The primary structure comprises 152 residues: Transcriptional repressor NrdR (152 aa).

The segment at 3–34 (CPFCSTEETKVIDSRLVSEGYQVRRRRECTNC) is a zinc-finger region. One can recognise an ATP-cone domain in the interval 49-139 (PKIVKTDGYR…VYLSFENINE (91 aa)).

This sequence belongs to the NrdR family. Requires Zn(2+) as cofactor.

Negatively regulates transcription of bacterial ribonucleotide reductase nrd genes and operons by binding to NrdR-boxes. This Actinobacillus succinogenes (strain ATCC 55618 / DSM 22257 / CCUG 43843 / 130Z) protein is Transcriptional repressor NrdR.